The following is a 570-amino-acid chain: Pre-mRNA 3'-end-processing factor FIP1 (570 aa).

Basic and acidic residues predominate over residues 1–10 (MSAEEADKTT). Residues 1–107 (MSAEEADKTT…SDDDDDDVRV (107 aa)) form a disordered region. Residues 16–38 (AGDEEEEWLYGDEGESKETEEEE) are compositionally biased toward acidic residues. Over residues 56–77 (DAPTTTNNSSDSATPPTTTTTT) the composition is skewed to low complexity. Acidic residues predominate over residues 87–104 (APGEDEDSESDSDDDDDD). Thr125 is modified (phosphothreonine). Ser247 bears the Phosphoserine mark. Disordered stretches follow at residues 300–328 (RRRH…VQKM), 371–400 (PNFP…YDGR), and 418–570 (GAVN…EAME). The span at 371 to 384 (PNFPPPTGGPPPSL) shows a compositional bias: pro residues. 2 stretches are compositionally biased toward basic and acidic residues: residues 436 to 462 (YPRR…RDHS) and 476 to 506 (DEER…EERH). Basic residues-rich tracts occupy residues 520–529 (KSSRSSSRRR) and 538–548 (HRRHKHKKSKR). Basic and acidic residues predominate over residues 549–562 (SKEGKEPSEERSAD).

The protein belongs to the FIP1 family.

The protein resides in the nucleus. Involved in mRNA processing. The protein is Pre-mRNA 3'-end-processing factor FIP1 (fip1l1) of Danio rerio (Zebrafish).